A 555-amino-acid chain; its full sequence is Inositol 1,4,5-trisphosphate receptor-interacting protein-like 1 (555 aa).

A signal peptide spans 1–24; the sequence is MNVDAEASMAVISLLFLAVMYVVH. Residues 25-103 lie on the Extracellular side of the membrane; it reads HPLMVSDRMD…WPFQADGQEG (79 aa). The stretch at 38 to 74 forms a coiled coil; the sequence is LARSRQLEKRMSEEMRLLEMEFEERKRAAEQRQKAEN. The chain crosses the membrane as a helical span at residues 104–124; the sequence is PLGWMLGNLWNTGLFCLFLVF. Residues 125-555 lie on the Cytoplasmic side of the membrane; the sequence is ELLRQNMQHE…LPHAPLAAAP (431 aa).

Belongs to the ITPRIP family. Expressed in testis and tumoral cells.

The protein localises to the cell membrane. Functionally, functions as a ligand of CD3E, inhibiting TCR-CD3 complex signaling to regulate T cell activation. Induces stable CD3E-NCK1 binding, thereby preventing the CD3E-ZAP70 interaction and subsequently inhibiting the activation of the downstream ERK-NFkB signaling cascade and calcium influx. In Homo sapiens (Human), this protein is Inositol 1,4,5-trisphosphate receptor-interacting protein-like 1.